Reading from the N-terminus, the 155-residue chain is Myosin light chain alkali (155 aa).

EF-hand domains are found at residues 7–41 and 80–115; these read REIENVEFVFEVMGSAGEGIDAVDLGDALRALNLN and GCYEDFIECLKLYDKEENGTMMLAELQHALLALGES.

As to quaternary structure, myosin is a hexamer of 2 heavy chains and 4 light chains.

In Drosophila pseudoobscura pseudoobscura (Fruit fly), this protein is Myosin light chain alkali (Mlc1).